The sequence spans 255 residues: uncharacterized protein (255 aa).

It belongs to the methyltransferase superfamily.

This is an uncharacterized protein from Mycobacterium marinum (strain ATCC BAA-535 / M).